We begin with the raw amino-acid sequence, 483 residues long: ATP-dependent RNA helicase DDX25 (483 aa).

Positions 61-74 (LAANSLLNKLIHQS) match the Nuclear export signal motif. Positions 97–125 (KTFEELRLKEELLKGIYAMGFNRPSKIQE) match the Q motif motif. The Nuclear localization signal signature appears at 100 to 114 (EELRLKEELLKGIYA). The region spanning 130–300 (MMLAHPPQNL…ERIIPDPNVI (171 aa)) is the Helicase ATP-binding domain. 143–150 (SQSGTGKT) contributes to the ATP binding site. The DEAD box motif lies at 247–250 (DEAD). Residues 311-478 (NIRQYYVLCE…QLNAEDMDEI (168 aa)) enclose the Helicase C-terminal domain.

This sequence belongs to the DEAD box helicase family. Phosphorylated on threonine residues. The phosphorylated form is found in the cytoplasm but not in the nucleus. As to expression, highly expressed in the Leydig and germ cells of the testis and weakly expressed in the pituitary and hypothalamus.

The protein localises to the cytoplasm. It localises to the nucleus. It carries out the reaction ATP + H2O = ADP + phosphate + H(+). Its function is as follows. ATP-dependent RNA helicase. Required for mRNA export and translation regulation during spermatid development. This is ATP-dependent RNA helicase DDX25 (DDX25) from Homo sapiens (Human).